The chain runs to 301 residues: Phosphatidylglycerol--prolipoprotein diacylglyceryl transferase (301 aa).

The next 3 helical transmembrane spans lie at 17-37 (LAVR…IVVG), 59-79 (MLFY…VLFY), and 97-117 (GGMS…LFAY). A 1,2-diacyl-sn-glycero-3-phospho-(1'-sn-glycerol) is bound at residue arginine 142. A run of 2 helical transmembrane segments spans residues 230–250 (MGAI…TVEF) and 265–285 (LSMG…LLVW).

This sequence belongs to the Lgt family.

Its subcellular location is the cell inner membrane. The catalysed reaction is L-cysteinyl-[prolipoprotein] + a 1,2-diacyl-sn-glycero-3-phospho-(1'-sn-glycerol) = an S-1,2-diacyl-sn-glyceryl-L-cysteinyl-[prolipoprotein] + sn-glycerol 1-phosphate + H(+). It functions in the pathway protein modification; lipoprotein biosynthesis (diacylglyceryl transfer). Functionally, catalyzes the transfer of the diacylglyceryl group from phosphatidylglycerol to the sulfhydryl group of the N-terminal cysteine of a prolipoprotein, the first step in the formation of mature lipoproteins. This chain is Phosphatidylglycerol--prolipoprotein diacylglyceryl transferase, found in Paraburkholderia phytofirmans (strain DSM 17436 / LMG 22146 / PsJN) (Burkholderia phytofirmans).